The primary structure comprises 149 residues: Urease accessory protein UreE (149 aa).

It belongs to the UreE family.

The protein localises to the cytoplasm. Functionally, involved in urease metallocenter assembly. Binds nickel. Probably functions as a nickel donor during metallocenter assembly. This chain is Urease accessory protein UreE, found in Synechococcus sp. (strain JA-3-3Ab) (Cyanobacteria bacterium Yellowstone A-Prime).